The primary structure comprises 367 residues: D-alanine--D-alanine ligase (367 aa).

Residues 145–351 (KRLLRDAGLP…QPALMDELVA (207 aa)) enclose the ATP-grasp domain. 174 to 229 (RAVGSSELFVKPANLGSSVGISKTRDAAEFEAACQLALRFDRKILIERCIAPVREI) is a binding site for ATP. Mg(2+)-binding residues include Asp-306, Glu-318, and Asn-320.

It belongs to the D-alanine--D-alanine ligase family. It depends on Mg(2+) as a cofactor. The cofactor is Mn(2+).

It is found in the cytoplasm. It carries out the reaction 2 D-alanine + ATP = D-alanyl-D-alanine + ADP + phosphate + H(+). The protein operates within cell wall biogenesis; peptidoglycan biosynthesis. Functionally, cell wall formation. The protein is D-alanine--D-alanine ligase of Bradyrhizobium sp. (strain ORS 278).